Reading from the N-terminus, the 124-residue chain is Small ribosomal subunit protein bS6 (124 aa).

The tract at residues 96–124 (ETGPSPMMKEVQREEAKKAAAAQPTEAQA) is disordered. A compositionally biased stretch (low complexity) spans 114-124 (AAAAQPTEAQA).

Belongs to the bacterial ribosomal protein bS6 family.

Binds together with bS18 to 16S ribosomal RNA. The polypeptide is Small ribosomal subunit protein bS6 (Burkholderia mallei (strain ATCC 23344)).